The following is a 363-amino-acid chain: Phosphoserine aminotransferase (363 aa).

Residue Arg-42 coordinates L-glutamate. Pyridoxal 5'-phosphate is bound by residues Gly-76–Arg-77, Trp-102, Thr-156, Asp-175, and Gln-198. Lys-199 is modified (N6-(pyridoxal phosphate)lysine). Residue Asn-240 to Thr-241 participates in pyridoxal 5'-phosphate binding.

It belongs to the class-V pyridoxal-phosphate-dependent aminotransferase family. SerC subfamily. In terms of assembly, homodimer. Requires pyridoxal 5'-phosphate as cofactor.

It is found in the cytoplasm. The enzyme catalyses O-phospho-L-serine + 2-oxoglutarate = 3-phosphooxypyruvate + L-glutamate. It catalyses the reaction 4-(phosphooxy)-L-threonine + 2-oxoglutarate = (R)-3-hydroxy-2-oxo-4-phosphooxybutanoate + L-glutamate. Its pathway is amino-acid biosynthesis; L-serine biosynthesis; L-serine from 3-phospho-D-glycerate: step 2/3. It participates in cofactor biosynthesis; pyridoxine 5'-phosphate biosynthesis; pyridoxine 5'-phosphate from D-erythrose 4-phosphate: step 3/5. Its function is as follows. Catalyzes the reversible conversion of 3-phosphohydroxypyruvate to phosphoserine and of 3-hydroxy-2-oxo-4-phosphonooxybutanoate to phosphohydroxythreonine. This is Phosphoserine aminotransferase from Shewanella baltica (strain OS223).